We begin with the raw amino-acid sequence, 420 residues long: ATP phosphoribosyltransferase regulatory subunit (420 aa).

It belongs to the class-II aminoacyl-tRNA synthetase family. HisZ subfamily. As to quaternary structure, heteromultimer composed of HisG and HisZ subunits.

The protein resides in the cytoplasm. It participates in amino-acid biosynthesis; L-histidine biosynthesis; L-histidine from 5-phospho-alpha-D-ribose 1-diphosphate: step 1/9. Functionally, required for the first step of histidine biosynthesis. May allow the feedback regulation of ATP phosphoribosyltransferase activity by histidine. The protein is ATP phosphoribosyltransferase regulatory subunit of Bacillus cereus (strain G9842).